Reading from the N-terminus, the 192-residue chain is Interleukin-18 (192 aa).

A propeptide spanning residues 1 to 35 is cleaved from the precursor; the sequence is MAAEPEDNCISFVEMKFINNTLYFVAENDEDLESD.

This sequence belongs to the IL-1 family. Forms a ternary complex with ligand-binding receptor subunit IL18R1 and signaling receptor subunit IL18RAP at the plasma membrane. Mature IL18 first binds to IL18R1 forming a low affinity binary complex, which then interacts with IL18RAP to form a high affinity ternary complex that signals inside the cell. Interacts with cargo receptor TMED10; the interaction mediates the translocation from the cytoplasm into the ERGIC (endoplasmic reticulum-Golgi intermediate compartment) and thereby secretion. Post-translationally, the pro-IL-18 precursor is processed by CASP1, CASP4 or CASP5 to yield its mature, active form. The pro-IL-18 precursor features autoinhibitory interactions between the propeptide and the post-cleavage-site region, preventing recognition by the IL18R1 receptor. Processing by CASP1, CASP4 or CASP5 induces conformational changes to generate critical receptor-binding sites. The mature form is then secreted and released in the extracellular milieu by passing through the gasdermin-D (GSDMD) pore. In contrast, cleavage by CASP3 inactivates IL18.

The protein resides in the cytoplasm. The protein localises to the cytosol. It localises to the secreted. Pro-inflammatory cytokine primarily involved in epithelial barrier repair, polarized T-helper 1 (Th1) cell and natural killer (NK) cell immune responses. Upon binding to IL18R1 and IL18RAP, forms a signaling ternary complex which activates NF-kappa-B, triggering synthesis of inflammatory mediators. Synergizes with IL12/interleukin-12 to induce IFNG synthesis from T-helper 1 (Th1) cells and natural killer (NK) cells. Involved in transduction of inflammation downstream of pyroptosis: its mature form is specifically released in the extracellular milieu by passing through the gasdermin-D (GSDMD) pore. The polypeptide is Interleukin-18 (IL18) (Sus scrofa (Pig)).